We begin with the raw amino-acid sequence, 83 residues long: MKASMFLALAGLVLLFVVGYASESEEKEFPRELLSKIFAVDDFTGEERGCKGFGDSCTPGKNECCPNYACSSKHKWCKVYLGK.

Positions 1–21 (MKASMFLALAGLVLLFVVGYA) are cleaved as a signal peptide. A propeptide spanning residues 22-48 (SESEEKEFPRELLSKIFAVDDFTGEER) is cleaved from the precursor. 3 disulfide bridges follow: C50-C65, C57-C70, and C64-C77. Position 81 is a leucine amide (L81).

It belongs to the neurotoxin 10 (Hwtx-1) family. 15 (Hntx-3) subfamily. As to quaternary structure, monomer. As to expression, expressed by the venom gland.

It localises to the secreted. Selective antagonist of neuronal tetrodotoxin (TTX)-sensitive voltage-gated sodium channels (IC(50)=1270 nM on Nav1.1/SCN1A, 270 nM on Nav1.2/SCN2A, 491 nM on Nav1.3/SCN3A and 232 nM on Nav1.7/SCN9A). This toxin suppress Nav1.7 current amplitude without significantly altering the activation, inactivation, and repriming kinetics. Short extreme depolarizations partially activate the toxin-bound channel, indicating voltage-dependent inhibition of this toxin. This toxin increases the deactivation of the Nav1.7 current after extreme depolarizations. The toxin-Nav1.7 complex is gradually dissociated upon prolonged strong depolarizations in a voltage-dependent manner, and the unbound toxin rebinds to Nav1.7 after a long repolarization. Moreover, analysis of chimeric channels showed that the DIIS3-S4 linker is critical for toxin binding to Nav1.7. These data are consistent with this toxin interacting with Nav1.7 site 4 and trapping the domain II voltage sensor in the closed state. The chain is Hainantoxin-III 8 from Cyriopagopus hainanus (Chinese bird spider).